We begin with the raw amino-acid sequence, 220 residues long: Miraculin (220 aa).

The first 29 residues, 1–29 (MKELTMLSLSFFFVSALLAAAANPLLSAA), serve as a signal peptide directing secretion. Asn71 carries N-linked (GlcNAc...) asparagine glycosylation. Disulfide bonds link Cys76–Cys121, Cys177–Cys188, and Cys181–Cys184. A glycan (N-linked (GlcNAc...) asparagine) is linked at Asn215.

The protein belongs to the protease inhibitor I3 (leguminous Kunitz-type inhibitor) family. As to quaternary structure, homotetramer; dimer of homodimer. Post-translationally, glycosylated; contains as much as 13,9% of sugars (glucosamine, mannose, galactose, xylose, and fucose). Expressed in fruit pulp after pollination. Not expressed in seeds, stems or leaves.

In terms of biological role, miraculin has the property of modifying a sour taste into a sweet taste. This alteration of taste perception persists for many minutes. The protein is Miraculin of Synsepalum dulcificum (Miracle fruit).